We begin with the raw amino-acid sequence, 503 residues long: Probable cytosol aminopeptidase (503 aa).

Mn(2+) contacts are provided by lysine 274 and aspartate 279. Residue lysine 286 is part of the active site. Aspartate 297, aspartate 356, and glutamate 358 together coordinate Mn(2+). Residue arginine 360 is part of the active site.

This sequence belongs to the peptidase M17 family. Mn(2+) serves as cofactor.

Its subcellular location is the cytoplasm. The catalysed reaction is Release of an N-terminal amino acid, Xaa-|-Yaa-, in which Xaa is preferably Leu, but may be other amino acids including Pro although not Arg or Lys, and Yaa may be Pro. Amino acid amides and methyl esters are also readily hydrolyzed, but rates on arylamides are exceedingly low.. It catalyses the reaction Release of an N-terminal amino acid, preferentially leucine, but not glutamic or aspartic acids.. Functionally, presumably involved in the processing and regular turnover of intracellular proteins. Catalyzes the removal of unsubstituted N-terminal amino acids from various peptides. In Burkholderia cenocepacia (strain ATCC BAA-245 / DSM 16553 / LMG 16656 / NCTC 13227 / J2315 / CF5610) (Burkholderia cepacia (strain J2315)), this protein is Probable cytosol aminopeptidase.